The sequence spans 283 residues: 4-diphosphocytidyl-2-C-methyl-D-erythritol kinase (283 aa).

Lys-12 is a catalytic residue. 99 to 109 (PLAAGIGGGSA) serves as a coordination point for ATP. Residue Asp-141 is part of the active site.

The protein belongs to the GHMP kinase family. IspE subfamily.

It carries out the reaction 4-CDP-2-C-methyl-D-erythritol + ATP = 4-CDP-2-C-methyl-D-erythritol 2-phosphate + ADP + H(+). It participates in isoprenoid biosynthesis; isopentenyl diphosphate biosynthesis via DXP pathway; isopentenyl diphosphate from 1-deoxy-D-xylulose 5-phosphate: step 3/6. Its function is as follows. Catalyzes the phosphorylation of the position 2 hydroxy group of 4-diphosphocytidyl-2C-methyl-D-erythritol. The sequence is that of 4-diphosphocytidyl-2-C-methyl-D-erythritol kinase from Sphingopyxis alaskensis (strain DSM 13593 / LMG 18877 / RB2256) (Sphingomonas alaskensis).